A 577-amino-acid chain; its full sequence is MRGQRRWAHPFTLIRRLFGNAVFSSLTRRIVFFNLVALVVLVGGIMYLNQFREGLIDARVESLLTQGEIIAGAISASASVDTNSITIDPEKLLELQAGESITPLPSDEDLEFPIIQERVAPVLRRLISPTRTRARLFDADADLLLDSRHLYSGGQVLRFDLPPVDPESPSLADEFGTWFNRLLQPGDLPLYKEPPGGNGSIYPEVMNALTGVRGAVVRVTEKGELIVSVAVPVQRFRAVLGVLLLSTQAGDIDKIVHAERLAIIRVFGVAALVNVILSLLLSSTIANPLRRLSAAAIRVRRGGAKEREEIPDFSSRQDEIGNLSVALREMTTALYDRIAAIENFAADVSHELKNPLTSLRSAVETLPLARNEESKKRLMDVIQHDVRRLDRLISDISDASRLDAELARADAKKVDLEKLLGDLVEISRQIRGSKKPVLLDFVVDRKDNPRASFIVSGYELRIGQIITNLIENARSFVPEQNGRIVVRLTRSRLRCIVYVEDNGPGIQAEDIDRIFERFYTDRPEGEDFGQNSGLGLSISRQIAEAHGGTLRAENIAGKDGRISGARFVLSLPAGPHP.

Residues 1-29 (MRGQRRWAHPFTLIRRLFGNAVFSSLTRR) lie on the Cytoplasmic side of the membrane. A helical membrane pass occupies residues 30–50 (IVFFNLVALVVLVGGIMYLNQ). At 51-260 (FREGLIDARV…DIDKIVHAER (210 aa)) the chain is on the periplasmic side. Residues 261–281 (LAIIRVFGVAALVNVILSLLL) traverse the membrane as a helical segment. Residues 282 to 577 (SSTIANPLRR…VLSLPAGPHP (296 aa)) are Cytoplasmic-facing. The region spanning 283–339 (STIANPLRRLSAAAIRVRRGGAKEREEIPDFSSRQDEIGNLSVALREMTTALYDRIA) is the HAMP domain. Residues 347-575 (DVSHELKNPL…RFVLSLPAGP (229 aa)) form the Histidine kinase domain. H350 bears the Phosphohistidine mark.

As to quaternary structure, homodimer.

Its subcellular location is the cell inner membrane. The enzyme catalyses ATP + protein L-histidine = ADP + protein N-phospho-L-histidine.. It functions in the pathway glycan metabolism; exopolysaccharide biosynthesis. Its function is as follows. Member of a two-component regulatory system ChvG(ExoS)/ChvI involved in regulating the production of succinoglycan. Activates ChvI by phosphorylation. The polypeptide is Sensor protein ChvG (chvG) (Rhizobium meliloti (strain 1021) (Ensifer meliloti)).